Consider the following 578-residue polypeptide: Isocitrate dehydrogenase kinase/phosphatase (578 aa).

ATP contacts are provided by residues 315–321 and lysine 336; that span reads APGIRGM. Aspartate 371 is a catalytic residue.

Belongs to the AceK family.

The protein resides in the cytoplasm. It catalyses the reaction L-seryl-[isocitrate dehydrogenase] + ATP = O-phospho-L-seryl-[isocitrate dehydrogenase] + ADP + H(+). Its function is as follows. Bifunctional enzyme which can phosphorylate or dephosphorylate isocitrate dehydrogenase (IDH) on a specific serine residue. This is a regulatory mechanism which enables bacteria to bypass the Krebs cycle via the glyoxylate shunt in response to the source of carbon. When bacteria are grown on glucose, IDH is fully active and unphosphorylated, but when grown on acetate or ethanol, the activity of IDH declines drastically concomitant with its phosphorylation. This Escherichia coli O139:H28 (strain E24377A / ETEC) protein is Isocitrate dehydrogenase kinase/phosphatase.